A 1588-amino-acid chain; its full sequence is Paternally-expressed gene 3 protein (1588 aa).

In terms of domain architecture, SCAN box spans histidine 46 to tyrosine 128. Disordered stretches follow at residues tyrosine 128–glutamine 230, aspartate 266–isoleucine 306, and lysine 319–aspartate 349. Residues glutamine 129–aspartate 142 show a composition bias toward acidic residues. Composition is skewed to basic and acidic residues over residues aspartate 143 to serine 152, serine 161 to serine 182, phenylalanine 206 to aspartate 225, and proline 295 to isoleucine 306. 3 consecutive C2H2-type zinc fingers follow at residues tyrosine 454–histidine 476, phenylalanine 507–histidine 529, and tyrosine 565–histidine 587. Positions phenylalanine 588–threonine 607 are enriched in basic and acidic residues. Positions phenylalanine 588–proline 610 are disordered. Residues tyrosine 627 to histidine 649 form a C2H2-type 4 zinc finger. The segment at leucine 838–arginine 930 is disordered. Residues leucine 868–proline 881 show a composition bias toward basic and acidic residues. Residues tyrosine 969 to histidine 991 form a C2H2-type 5 zinc finger. Residues glutamate 1056–aspartate 1104 are disordered. A compositionally biased stretch (basic and acidic residues) spans glutamate 1071–glutamate 1082. 5 C2H2-type zinc fingers span residues tyrosine 1107–histidine 1129, tyrosine 1163–histidine 1185, isoleucine 1225–histidine 1247, phenylalanine 1282–histidine 1304, and tyrosine 1332–histidine 1354. Residues glutamate 1393–aspartate 1495 form a disordered region. Residues alanine 1395–alanine 1415 show a composition bias toward acidic residues. 7 repeat units span residues proline 1397–glutamate 1403, proline 1404–glutamate 1410, proline 1411–glutamate 1417, proline 1418–alanine 1422, proline 1425–alanine 1429, proline 1432–alanine 1436, and proline 1439–alanine 1443. A 3 X 7 AA repeat of P-E-V-E-A-A-E region spans residues proline 1397–glutamate 1417. Residues proline 1418–alanine 1443 are 4 X 5 AA repeat of P-X-G-E-A. Composition is skewed to acidic residues over residues aspartate 1449–glutamate 1466 and proline 1475–aspartate 1495. 2 consecutive C2H2-type zinc fingers follow at residues tyrosine 1505–histidine 1527 and phenylalanine 1564–histidine 1586.

Belongs to the krueppel C2H2-type zinc-finger protein family. Homodimer. Interacts with SIAH1A and SIAH2. Interacts with TRAF2.

The protein localises to the nucleus. It localises to the cytoplasm. Induces apoptosis in cooperation with SIAH1A. Acts as a mediator between p53/TP53 and BAX in a neuronal death pathway that is activated by DNA damage. Acts synergistically with TRAF2 and inhibits TNF induced apoptosis through activation of NF-kappa-B. The chain is Paternally-expressed gene 3 protein (PEG3) from Pan paniscus (Pygmy chimpanzee).